A 220-amino-acid polypeptide reads, in one-letter code: GTP cyclohydrolase 1 (220 aa).

Zn(2+) contacts are provided by Cys-109, His-112, and Cys-180.

The protein belongs to the GTP cyclohydrolase I family. As to quaternary structure, toroid-shaped homodecamer, composed of two pentamers of five dimers.

It carries out the reaction GTP + H2O = 7,8-dihydroneopterin 3'-triphosphate + formate + H(+). Its pathway is cofactor biosynthesis; 7,8-dihydroneopterin triphosphate biosynthesis; 7,8-dihydroneopterin triphosphate from GTP: step 1/1. The chain is GTP cyclohydrolase 1 from Yersinia pseudotuberculosis serotype O:1b (strain IP 31758).